A 295-amino-acid polypeptide reads, in one-letter code: Probable endonuclease 4 (295 aa).

Zn(2+) is bound by residues H78, H118, E154, D188, H191, H225, D238, H240, and E270.

It belongs to the AP endonuclease 2 family. Zn(2+) is required as a cofactor.

It carries out the reaction Endonucleolytic cleavage to 5'-phosphooligonucleotide end-products.. Its function is as follows. Endonuclease IV plays a role in DNA repair. It cleaves phosphodiester bonds at apurinic or apyrimidinic (AP) sites, generating a 3'-hydroxyl group and a 5'-terminal sugar phosphate. The polypeptide is Probable endonuclease 4 (Vibrio campbellii (strain ATCC BAA-1116)).